Consider the following 750-residue polypeptide: Photosystem I P700 chlorophyll a apoprotein A1 (750 aa).

A run of 8 helical transmembrane segments spans residues 70-93, 156-179, 195-219, 291-309, 346-369, 385-411, 433-455, and 531-549; these read VFSA…FHGA, LYCT…FHYH, LNHH…HVSL, IAHH…GHMY, WHAQ…HHMY, LSLF…IFMV, AIIS…LYIH, and FLVH…LILL. The [4Fe-4S] cluster site is built by cysteine 573 and cysteine 582. 2 helical membrane passes run 589-610 and 664-686; these read HVFL…HFSW and LSAY…MFLF. Histidine 675 lines the chlorophyll a' pocket. 2 residues coordinate chlorophyll a: methionine 683 and tyrosine 691. Phylloquinone is bound at residue tryptophan 692. A helical transmembrane segment spans residues 724–744; sequence AVGVTHYLLGGIATTWAFFLA.

Belongs to the PsaA/PsaB family. In terms of assembly, the PsaA/B heterodimer binds the P700 chlorophyll special pair and subsequent electron acceptors. PSI consists of a core antenna complex that captures photons, and an electron transfer chain that converts photonic excitation into a charge separation. The eukaryotic PSI reaction center is composed of at least 11 subunits. P700 is a chlorophyll a/chlorophyll a' dimer, A0 is one or more chlorophyll a, A1 is one or both phylloquinones and FX is a shared 4Fe-4S iron-sulfur center. is required as a cofactor.

It is found in the plastid. The protein resides in the chloroplast thylakoid membrane. The enzyme catalyses reduced [plastocyanin] + hnu + oxidized [2Fe-2S]-[ferredoxin] = oxidized [plastocyanin] + reduced [2Fe-2S]-[ferredoxin]. Functionally, psaA and PsaB bind P700, the primary electron donor of photosystem I (PSI), as well as the electron acceptors A0, A1 and FX. PSI is a plastocyanin-ferredoxin oxidoreductase, converting photonic excitation into a charge separation, which transfers an electron from the donor P700 chlorophyll pair to the spectroscopically characterized acceptors A0, A1, FX, FA and FB in turn. Oxidized P700 is reduced on the lumenal side of the thylakoid membrane by plastocyanin. The chain is Photosystem I P700 chlorophyll a apoprotein A1 from Eucalyptus globulus subsp. globulus (Tasmanian blue gum).